Consider the following 436-residue polypeptide: Chromosomal replication initiator protein DnaA (436 aa).

Residues 1-69 form a domain I, interacts with DnaA modulators region; sequence MLADEVLELL…AHLFEVKTGT (69 aa). The interval 69-99 is domain II; it reads TKPNVEITTQTKLKSSKQNQVNIKQIKAQST. The segment at 100–314 is domain III, AAA+ region; that stretch reads LLNPAYTFEN…SAIINLNAYA (215 aa). ATP-binding residues include Gly144, Gly146, Lys147, and Thr148. The segment at 315–436 is domain IV, binds dsDNA; that stretch reads NLMRQEITLD…ELKNKILTKG (122 aa).

Belongs to the DnaA family. Oligomerizes as a right-handed, spiral filament on DNA at oriC.

Its subcellular location is the cytoplasm. In terms of biological role, plays an essential role in the initiation and regulation of chromosomal replication. ATP-DnaA binds to the origin of replication (oriC) to initiate formation of the DNA replication initiation complex once per cell cycle. Binds the DnaA box (a 9 base pair repeat at the origin) and separates the double-stranded (ds)DNA. Forms a right-handed helical filament on oriC DNA; dsDNA binds to the exterior of the filament while single-stranded (ss)DNA is stabiized in the filament's interior. The ATP-DnaA-oriC complex binds and stabilizes one strand of the AT-rich DNA unwinding element (DUE), permitting loading of DNA polymerase. After initiation quickly degrades to an ADP-DnaA complex that is not apt for DNA replication. Binds acidic phospholipids. This Campylobacter curvus (strain 525.92) protein is Chromosomal replication initiator protein DnaA.